Here is a 760-residue protein sequence, read N- to C-terminus: Sphingosine kinase B (760 aa).

The interval 1-108 (MENNNNEPAE…NNNNNEPVTS (108 aa)) is disordered. Residues 12-39 (VQEKGPKLKNDIDLNDQFKDEKEKKEEI) are compositionally biased toward basic and acidic residues. A compositionally biased stretch (low complexity) spans 40 to 106 (SSSSIENKNN…NNNNNNNEPV (67 aa)). The 137-residue stretch at 247–383 (PKNRKIRILI…LDVCIVQQPT (137 aa)) folds into the DAGKc domain. ATP is bound by residues 257 to 259 (NPK) and threonine 288. 313-316 (SGDG) contacts substrate. Aspartate 315 (proton donor/acceptor) is an active-site residue. Residues glutamate 320 and 345–347 (GTG) each bind ATP. The tract at residues 394 to 438 (TVTTTTTTTSPTSASPTITSANNNNNNNNNNNNNNNNNNNNNNNN) is disordered. Substrate is bound at residue aspartate 461. Arginine 468 and arginine 474 together coordinate ATP. The disordered stretch occupies residues 535–605 (DNDNNNKNKN…SSPRSDINMS (71 aa)). Over residues 549–597 (EINSTTSNNNNNNNTTTTSTSSSTSTSTSTSSLTATTTTAKSTNSLSSS) the composition is skewed to low complexity. 734–736 (DGE) contributes to the ATP binding site.

It carries out the reaction a sphingoid base + ATP = a sphingoid 1-phosphate + ADP + H(+). Inhibited by N,N,-dimethylsphingosine. Its function is as follows. Catalyzes the phosphorylation of sphingosine to form sphingosine-1-phosphate (S1P), which probably acts intracellularly as a second messenger perhaps by promoting cell proliferation. The chain is Sphingosine kinase B (sgkB) from Dictyostelium discoideum (Social amoeba).